We begin with the raw amino-acid sequence, 106 residues long: Large ribosomal subunit protein uL24 (106 aa).

This sequence belongs to the universal ribosomal protein uL24 family. As to quaternary structure, part of the 50S ribosomal subunit.

Functionally, one of two assembly initiator proteins, it binds directly to the 5'-end of the 23S rRNA, where it nucleates assembly of the 50S subunit. One of the proteins that surrounds the polypeptide exit tunnel on the outside of the subunit. This chain is Large ribosomal subunit protein uL24, found in Laribacter hongkongensis (strain HLHK9).